A 434-amino-acid polypeptide reads, in one-letter code: Arrestin domain-containing protein 1 (434 aa).

A disordered region spans residues 292–349; the sequence is SPCPGRESSPGTLSLVVPSAPPQEEAEAVASGPHFSDPVSLSTKSHSQQQPLSAPLGS. A compositionally biased stretch (polar residues) spans 330–343; sequence VSLSTKSHSQQQPL. 2 consecutive short sequence motifs (PPxY motif) follow at residues 401 to 404 and 414 to 417; these read PPEY and PPSY.

Belongs to the arrestin family. As to quaternary structure, interacts (via PPxY motifs) with ITCH (via WW domains); the interaction is direct and participates in the recruitment of the ubiquitin-protein ligase ITCH to the NOTCH1 receptor. Interacts with ARRB1 and ARRB2; the interaction is direct. Interacts with TSG101; may recruit TSG101 to the plasma membrane. Interacts (via PPxY motifs) with WWP2 (via WW domains); ubiquitinates ARRDC1. Interacts with SLC11A2; controls the incorporation of SLC11A2 into extracellular vesicles through an ubiquitination-dependent mechanism. Interacts with WWP1 (via WW domains). Interacts with NEDD4 (via WW domains). Interacts with PDCD6IP. Ubiquitinated. Ubiquitination by WWP2; promotes localization to extracellular microvesicles. Ubiquitinated by WWP1.

It is found in the cell membrane. Functionally, functions as an adapter recruiting ubiquitin-protein ligases to their specific substrates. Through an ubiquitination-dependent mechanism plays for instance a role in the incorporation of SLC11A2 into extracellular vesicles. More generally, plays a role in the extracellular transport of proteins between cells through the release in the extracellular space of microvesicles. By participating to the ITCH-mediated ubiquitination and subsequent degradation of NOTCH1, negatively regulates the NOTCH signaling pathway. The polypeptide is Arrestin domain-containing protein 1 (Mus musculus (Mouse)).